The primary structure comprises 180 residues: MKTAARIVAFTALTGFALGMPTVAMAEMETTEKSAVVSQAATDSAMTIVEVAAGNETFSTLVAAVKAADLVEALSAEGPFTVFAPTNDAFAALPAGTVESLLLPENKDKLVKILTYHVVPGKITAAQVQSGEVASLAGEALTFKVKDGKVKVNKATVISADVDASNGVIHVIDQVILPPM.

An N-terminal signal peptide occupies residues 1–26 (MKTAARIVAFTALTGFALGMPTVAMA). The 132-residue stretch at 45–176 (AMTIVEVAAG…GVIHVIDQVI (132 aa)) folds into the FAS1 domain.

In Synechocystis sp. (strain ATCC 27184 / PCC 6803 / Kazusa), this protein is Protein sll1483.